Consider the following 151-residue polypeptide: Acidic phospholipase A2 1 (151 aa).

Residues 1 to 21 form the signal peptide; that stretch reads MNPAHLLVLSAVCVSLLGASS. Residues 22-27 constitute a propeptide that is removed on maturation; the sequence is IPPQPL. 7 cysteine pairs are disulfide-bonded: Cys38–Cys104, Cys54–Cys151, Cys56–Cys72, Cys71–Cys132, Cys78–Cys125, Cys88–Cys118, and Cys111–Cys123. Residues Tyr55, Gly57, and Gly59 each contribute to the Ca(2+) site. His75 is an active-site residue. Residue Asp76 participates in Ca(2+) binding. The active site involves Asp126.

Ca(2+) is required as a cofactor. Expressed by the venom gland.

It is found in the secreted. It catalyses the reaction a 1,2-diacyl-sn-glycero-3-phosphocholine + H2O = a 1-acyl-sn-glycero-3-phosphocholine + a fatty acid + H(+). Snake venom phospholipase A2 (PLA2) that may exhibit cardiotoxicity, myotoxicity, antiplatelet activity, and edema-inducing activity. PLA2 catalyzes the calcium-dependent hydrolysis of the 2-acyl groups in 3-sn-phosphoglycerides. The sequence is that of Acidic phospholipase A2 1 from Ophiophagus hannah (King cobra).